The following is a 291-amino-acid chain: NAD kinase (291 aa).

The active-site Proton acceptor is aspartate 72. Residues 72-73 (DG), 146-147 (ND), arginine 157, arginine 174, aspartate 176, 187-192 (TAYSLS), and glutamine 247 each bind NAD(+).

It belongs to the NAD kinase family. A divalent metal cation is required as a cofactor.

The protein resides in the cytoplasm. The catalysed reaction is NAD(+) + ATP = ADP + NADP(+) + H(+). Functionally, involved in the regulation of the intracellular balance of NAD and NADP, and is a key enzyme in the biosynthesis of NADP. Catalyzes specifically the phosphorylation on 2'-hydroxyl of the adenosine moiety of NAD to yield NADP. The polypeptide is NAD kinase (Hydrogenovibrio crunogenus (strain DSM 25203 / XCL-2) (Thiomicrospira crunogena)).